We begin with the raw amino-acid sequence, 804 residues long: Zinc finger protein 541 (804 aa).

Disordered stretches follow at residues 21 to 120 (SKAS…NPDI) and 133 to 197 (TLDL…GNPR). A C2H2-type 1 zinc finger spans residues 285-307 (FICKNCSQMFYTEKGLSSHMCFH). The disordered stretch occupies residues 379-426 (MEQEKDGEERDSKESSQQRKRKKRPPPKRLFIPPPPSTAGEPGPAGCH). Residues 380–395 (EQEKDGEERDSKESSQ) show a composition bias toward basic and acidic residues. Residues 396–405 (QRKRKKRPPP) show a composition bias toward basic residues. The ELM2 domain occupies 509 to 601 (PHINIGSRFQ…VALETLLLRG (93 aa)). The SANT domain occupies 616-667 (TGSDVWTPIEKRLFKKAFYAHKKDFYLIHKTIQTKTVAQCVEYYYIWKKMIK). Residues 680-743 (VKREPEEVER…TPEPSGSVES (64 aa)) are disordered. Residues 690 to 721 (TEEKVPCSPRERPSHHPIPELKIKTKSYRRES) show a composition bias toward basic and acidic residues. The C2H2-type 2 zinc finger occupies 747 to 769 (FPCRECERVFDKIKSRNAHMKRH).

In terms of assembly, interacts with DNTTIP1. Identified in a complex with KCDT19, HDAC1 and HSPA2s. Component of a histone deacetylase complex containing DNTTIP1, ZNF541, HDAC1 and HDAC2. Identified in a complex with HDAC1, HDAC2, DNTTIP1 and KCTD19.

It is found in the nucleus. Functionally, transcription regulator which is essential for male fertility and for the completion of meiotic prophase in spermatocytes. Regulates progression of the pachytene stage of meiotic prophase by activating the expression of genes involved in meiosis and post-meiosis during spermatogenesis. Maintains the repression of pre-pachytene transcriptional programs, including meiotic double-strand breaks (DSB) formation genes in pachytene spermatocytes and suppresses aberrant DSB formation after mid-pachytene, thus ensuring meiosis progression. The sequence is that of Zinc finger protein 541 (ZNF541) from Macaca fascicularis (Crab-eating macaque).